Consider the following 215-residue polypeptide: N-(5'-phosphoribosyl)anthranilate isomerase (215 aa).

The protein belongs to the TrpF family.

It carries out the reaction N-(5-phospho-beta-D-ribosyl)anthranilate = 1-(2-carboxyphenylamino)-1-deoxy-D-ribulose 5-phosphate. The protein operates within amino-acid biosynthesis; L-tryptophan biosynthesis; L-tryptophan from chorismate: step 3/5. This Sinorhizobium medicae (strain WSM419) (Ensifer medicae) protein is N-(5'-phosphoribosyl)anthranilate isomerase.